Here is a 289-residue protein sequence, read N- to C-terminus: Acetyl-coenzyme A carboxylase carboxyl transferase subunit beta (289 aa).

Residues 28–289 enclose the CoA carboxyltransferase N-terminal domain; sequence VMTKCPKCKK…QGGEMAVWQS (262 aa). Positions 32, 35, 51, and 54 each coordinate Zn(2+). The C4-type zinc finger occupies 32-54; that stretch reads CPKCKKIMYTKELLKNLKVCVNC.

Belongs to the AccD/PCCB family. Acetyl-CoA carboxylase is a heterohexamer composed of biotin carboxyl carrier protein (AccB), biotin carboxylase (AccC) and two subunits each of ACCase subunit alpha (AccA) and ACCase subunit beta (AccD). Zn(2+) is required as a cofactor.

It localises to the cytoplasm. The catalysed reaction is N(6)-carboxybiotinyl-L-lysyl-[protein] + acetyl-CoA = N(6)-biotinyl-L-lysyl-[protein] + malonyl-CoA. It participates in lipid metabolism; malonyl-CoA biosynthesis; malonyl-CoA from acetyl-CoA: step 1/1. In terms of biological role, component of the acetyl coenzyme A carboxylase (ACC) complex. Biotin carboxylase (BC) catalyzes the carboxylation of biotin on its carrier protein (BCCP) and then the CO(2) group is transferred by the transcarboxylase to acetyl-CoA to form malonyl-CoA. The protein is Acetyl-coenzyme A carboxylase carboxyl transferase subunit beta of Bacillus cereus (strain ATCC 10987 / NRS 248).